A 183-amino-acid chain; its full sequence is Adenylate kinase (183 aa).

ATP is bound at residue 12-17; the sequence is GAGKGT. Residues 32 to 61 are NMP; that stretch reads STGDLLRSEVAAGTALGQEAEAVMNRGELV. Residues Thr-33, Arg-38, 59 to 61, 86 to 89, and Gln-93 each bind AMP; these read ELV and GFPR. Residues 127–133 are LID; sequence ARGRDDD. Arg-128 provides a ligand contact to ATP. 2 residues coordinate AMP: Arg-130 and Arg-141. Gly-169 serves as a coordination point for ATP.

The protein belongs to the adenylate kinase family. Monomer.

The protein localises to the cytoplasm. The catalysed reaction is AMP + ATP = 2 ADP. It participates in purine metabolism; AMP biosynthesis via salvage pathway; AMP from ADP: step 1/1. Functionally, catalyzes the reversible transfer of the terminal phosphate group between ATP and AMP. Plays an important role in cellular energy homeostasis and in adenine nucleotide metabolism. In Parasynechococcus marenigrum (strain WH8102), this protein is Adenylate kinase.